Consider the following 624-residue polypeptide: Actin-related protein 8 (624 aa).

Met1 bears the N-acetylmethionine mark. A compositionally biased stretch (basic and acidic residues) spans 1–25 (MTQAEKGDTENGKEKGGEKEKEQRG). Residues 1 to 29 (MTQAEKGDTENGKEKGGEKEKEQRGVKRP) form a disordered region. Residues Ser55 and Thr56 each coordinate ATP. Ser132 carries the post-translational modification Phosphoserine. 283–286 (DVGD) serves as a coordination point for ATP. Phosphoserine is present on Ser412. Residues 430-462 (SKQEQSAKATADRKSASKPIGFEGDLRGQSSDL) form a disordered region.

Belongs to the actin family. ARP8 subfamily. As to quaternary structure, component of the chromatin remodeling INO80 complex; specifically part of a complex module associated with the DBINO domain of INO80. Interacts with ACTR5; the interaction is observed in asynchronous (interphase) cells but not in metaphase-arrested cells indicative for a possible dissociation of the INO80 complex in mitotic cells. Exists as monomers and dimers, but the dimer is most probably the biologically relevant form required for stable interactions with histones that exploits the twofold symmetry of the nucleosome core.

It localises to the nucleus. The protein localises to the chromosome. Plays an important role in the functional organization of mitotic chromosomes. Exhibits low basal ATPase activity, and unable to polymerize. Functionally, proposed core component of the chromatin remodeling INO80 complex which is involved in transcriptional regulation, DNA replication and probably DNA repair. Required for the recruitment of INO80 (and probably the INO80 complex) to sites of DNA damage. Strongly prefer nucleosomes and H3-H4 tetramers over H2A-H2B dimers, suggesting it may act as a nucleosome recognition module within the complex. This chain is Actin-related protein 8 (ACTR8), found in Homo sapiens (Human).